Consider the following 190-residue polypeptide: MSDDVDSETRSRTPSISSRQFIIPEDELATLDSENSSLDSGGEEASSGGSDAYSAAGGSTPVFSRLGQHPSTFFTGSQVAPIFDTSLYLFESLTQSLDSVDFSEALSLQTKTSATINSKSRELQLLVGEVQTHLRRLQTAFEQGQHTAQRVRHNLRDITRGVESLKQTFARSYPIEYHQALERAYERRAE.

The interval 1–56 is disordered; that stretch reads MSDDVDSETRSRTPSISSRQFIIPEDELATLDSENSSLDSGGEEASSGGSDAYSAA. The segment covering 36–56 has biased composition (low complexity); that stretch reads SSLDSGGEEASSGGSDAYSAA.

Belongs to the KXD1 family. In terms of assembly, component of the biogenesis of lysosome-related organelles complex-1 (BLOC-1).

It is found in the endosome. Its function is as follows. Component of the biogenesis of lysosome-related organelles complex-1 (BLOC-1) involved in endosomal cargo sorting. The protein is Biogenesis of lysosome-related organelles complex 1 subunit KXD1 (KXD1) of Eremothecium gossypii (strain ATCC 10895 / CBS 109.51 / FGSC 9923 / NRRL Y-1056) (Yeast).